The following is a 30-amino-acid chain: Cyclotide cter-O (30 aa).

Residues 1–30 (GIPCGESCVFIPCITGIAGCSCKSKVCYRN) constitute a cross-link (cyclopeptide (Gly-Asn)). Intrachain disulfides connect cysteine 4/cysteine 20, cysteine 8/cysteine 22, and cysteine 13/cysteine 27.

This is a cyclic peptide.

Its subcellular location is the secreted. Functionally, probably participates in a plant defense mechanism. The sequence is that of Cyclotide cter-O from Clitoria ternatea (Butterfly pea).